Reading from the N-terminus, the 157-residue chain is Ribosome maturation factor RimP (157 aa).

Belongs to the RimP family.

Its subcellular location is the cytoplasm. In terms of biological role, required for maturation of 30S ribosomal subunits. The protein is Ribosome maturation factor RimP of Helicobacter hepaticus (strain ATCC 51449 / 3B1).